The sequence spans 362 residues: Ferrochelatase (362 aa).

Residues His-212 and Glu-294 each contribute to the Fe cation site.

It belongs to the ferrochelatase family.

Its subcellular location is the cytoplasm. It catalyses the reaction heme b + 2 H(+) = protoporphyrin IX + Fe(2+). It participates in porphyrin-containing compound metabolism; protoheme biosynthesis; protoheme from protoporphyrin-IX: step 1/1. In terms of biological role, catalyzes the ferrous insertion into protoporphyrin IX. The protein is Ferrochelatase of Leptospira biflexa serovar Patoc (strain Patoc 1 / Ames).